Consider the following 468-residue polypeptide: uncharacterized protein (468 aa).

The N-terminal stretch at 1 to 19 (MRVLSVLLVALTVAGSAYS) is a signal peptide. Asn-86 and Asn-334 each carry an N-linked (GlcNAc...) asparagine glycan. The tract at residues 401–421 (NPSTNLPETSPPTEQPTAPPA) is disordered. A compositionally biased stretch (pro residues) spans 409-421 (TSPPTEQPTAPPA). The N-linked (GlcNAc...) asparagine glycan is linked to Asn-435. A lipid anchor (GPI-like-anchor amidated asparagine) is attached at Asn-444. A propeptide spans 445–468 (SASSIEMSKLVVAILSLFILAFFH) (removed in mature form).

It localises to the cell membrane. This is an uncharacterized protein from Dictyostelium discoideum (Social amoeba).